Reading from the N-terminus, the 380-residue chain is S-adenosylmethionine:tRNA ribosyltransferase-isomerase (380 aa).

Basic and acidic residues predominate over residues Met-1–Thr-15. The segment at Met-1–Ala-24 is disordered.

It belongs to the QueA family. As to quaternary structure, monomer.

It is found in the cytoplasm. It catalyses the reaction 7-aminomethyl-7-carbaguanosine(34) in tRNA + S-adenosyl-L-methionine = epoxyqueuosine(34) in tRNA + adenine + L-methionine + 2 H(+). Its pathway is tRNA modification; tRNA-queuosine biosynthesis. Its function is as follows. Transfers and isomerizes the ribose moiety from AdoMet to the 7-aminomethyl group of 7-deazaguanine (preQ1-tRNA) to give epoxyqueuosine (oQ-tRNA). The sequence is that of S-adenosylmethionine:tRNA ribosyltransferase-isomerase from Oleidesulfovibrio alaskensis (strain ATCC BAA-1058 / DSM 17464 / G20) (Desulfovibrio alaskensis).